A 275-amino-acid chain; its full sequence is 3-methyl-2-oxobutanoate hydroxymethyltransferase (275 aa).

Residues Asp49 and Asp88 each contribute to the Mg(2+) site. 3-methyl-2-oxobutanoate is bound by residues 49 to 50, Asp88, and Lys118; that span reads DS. Mg(2+) is bound at residue Glu120. Glu187 functions as the Proton acceptor in the catalytic mechanism.

The protein belongs to the PanB family. In terms of assembly, homodecamer; pentamer of dimers. The cofactor is Mg(2+).

The protein resides in the cytoplasm. It carries out the reaction 3-methyl-2-oxobutanoate + (6R)-5,10-methylene-5,6,7,8-tetrahydrofolate + H2O = 2-dehydropantoate + (6S)-5,6,7,8-tetrahydrofolate. It functions in the pathway cofactor biosynthesis; (R)-pantothenate biosynthesis; (R)-pantoate from 3-methyl-2-oxobutanoate: step 1/2. Functionally, catalyzes the reversible reaction in which hydroxymethyl group from 5,10-methylenetetrahydrofolate is transferred onto alpha-ketoisovalerate to form ketopantoate. This chain is 3-methyl-2-oxobutanoate hydroxymethyltransferase, found in Bordetella petrii (strain ATCC BAA-461 / DSM 12804 / CCUG 43448).